Reading from the N-terminus, the 130-residue chain is 3-aminoacrylate deaminase RutC (130 aa).

It belongs to the RutC family.

The enzyme catalyses (Z)-3-aminoacrylate + H2O + H(+) = 3-oxopropanoate + NH4(+). Involved in pyrimidine catabolism. Catalyzes the deamination of 3-aminoacrylate to malonic semialdehyde, a reaction that can also occur spontaneously. RutC may facilitate the reaction and modulate the metabolic fitness, rather than catalyzing essential functions. In Klebsiella variicola (strain At-22), this protein is 3-aminoacrylate deaminase RutC.